The chain runs to 371 residues: Putative 8-amino-7-oxononanoate synthase (371 aa).

Arg21 is a binding site for substrate. 108–109 provides a ligand contact to pyridoxal 5'-phosphate; that stretch reads GY. His133 contacts substrate. Pyridoxal 5'-phosphate is bound by residues Ser180, 205–208, and 234–237; these read DDAH and TLSK. Lys237 bears the N6-(pyridoxal phosphate)lysine mark. Thr333 is a substrate binding site.

It belongs to the class-II pyridoxal-phosphate-dependent aminotransferase family. BioF subfamily. In terms of assembly, homodimer. Pyridoxal 5'-phosphate is required as a cofactor.

It catalyses the reaction 6-carboxyhexanoyl-[ACP] + L-alanine + H(+) = (8S)-8-amino-7-oxononanoate + holo-[ACP] + CO2. It functions in the pathway cofactor biosynthesis; biotin biosynthesis. Functionally, catalyzes the decarboxylative condensation of pimeloyl-[acyl-carrier protein] and L-alanine to produce 8-amino-7-oxononanoate (AON), [acyl-carrier protein], and carbon dioxide. This Bacillus subtilis subsp. natto protein is Putative 8-amino-7-oxononanoate synthase (bioF).